A 277-amino-acid chain; its full sequence is 3-methyl-2-oxobutanoate hydroxymethyltransferase (277 aa).

Mg(2+) is bound by residues Asp-53 and Asp-96. Residues 53–54 (DS), Asp-96, and Lys-126 each bind 3-methyl-2-oxobutanoate. Glu-128 lines the Mg(2+) pocket. Glu-195 serves as the catalytic Proton acceptor.

The protein belongs to the PanB family. As to quaternary structure, homodecamer; pentamer of dimers. It depends on Mg(2+) as a cofactor.

The protein resides in the cytoplasm. It catalyses the reaction 3-methyl-2-oxobutanoate + (6R)-5,10-methylene-5,6,7,8-tetrahydrofolate + H2O = 2-dehydropantoate + (6S)-5,6,7,8-tetrahydrofolate. The protein operates within cofactor biosynthesis; (R)-pantothenate biosynthesis; (R)-pantoate from 3-methyl-2-oxobutanoate: step 1/2. In terms of biological role, catalyzes the reversible reaction in which hydroxymethyl group from 5,10-methylenetetrahydrofolate is transferred onto alpha-ketoisovalerate to form ketopantoate. The sequence is that of 3-methyl-2-oxobutanoate hydroxymethyltransferase from Prosthecochloris aestuarii (strain DSM 271 / SK 413).